A 250-amino-acid chain; its full sequence is UPF0736 protein BPUM_1067 (250 aa).

It belongs to the UPF0736 family.

This chain is UPF0736 protein BPUM_1067, found in Bacillus pumilus (strain SAFR-032).